A 492-amino-acid polypeptide reads, in one-letter code: Protein odr-4 homolog (492 aa).

Residues 251 to 270 (LQPTSTTGGTATASSNTTDS) form a disordered region. Over residues 254–268 (TSTTGGTATASSNTT) the composition is skewed to low complexity. A helical membrane pass occupies residues 469-489 (MVGIAVALLVLLSSVALHFVL).

The protein belongs to the ODR-4 family.

It is found in the membrane. May play a role in the trafficking of a subset of G-protein coupled receptors. In Drosophila melanogaster (Fruit fly), this protein is Protein odr-4 homolog.